A 148-amino-acid chain; its full sequence is SUMO-conjugating enzyme UBC9 (148 aa).

Residues 1 to 147 (MASKRILKEL…ARTWTQKYAM (147 aa)) enclose the UBC core domain. The active-site Glycyl thioester intermediate is the Cys-85.

Belongs to the ubiquitin-conjugating enzyme family. Interacts with CHIP. As to expression, highest expression in young stems and old leaves. Lowest levels in floral buds, anthers and young leaves.

It participates in protein modification; protein sumoylation. Its function is as follows. Accepts the ubiquitin-like protein SUMO/SMT3 from the E1 complex and catalyzes its covalent attachment to other proteins. Mediates the selective degradation of short-lived and abnormal proteins. In Arabidopsis thaliana (Mouse-ear cress), this protein is SUMO-conjugating enzyme UBC9 (UBC9).